The chain runs to 871 residues: Scavenger receptor class F member 2 (871 aa).

The segment at 1 to 20 is disordered; it reads MEGAGPRGAGPARRRGAGGP. An N-terminal signal peptide occupies residues 1-43; the sequence is MEGAGPRGAGPARRRGAGGPPSPLLPSLLLLLLLWMLPDTVAP. Over 44–441 the chain is Extracellular; sequence QELNPRGRNV…ACHLETNQRK (398 aa). EGF-like domains are found at residues 71–110, 122–153, 148–182, 183–212, 213–241, and 236–270; these read QGDE…ANCD, CKEL…ARCE, WGAR…AQCA, SACY…RSCN, NQCA…ARCD, and FGAR…KYCR. Intrachain disulfides connect Cys75–Cys86, Cys80–Cys98, Cys100–Cys109, Cys126–Cys134, Cys128–Cys141, Cys143–Cys152, Cys156–Cys163, Cys158–Cys170, Cys172–Cys181, Cys185–Cys193, Cys187–Cys200, Cys202–Cys211, Cys215–Cys222, Cys217–Cys229, Cys231–Cys240, Cys244–Cys251, Cys246–Cys258, and Cys260–Cys269. Residue Asn83 is glycosylated (N-linked (GlcNAc...) asparagine). 2 N-linked (GlcNAc...) asparagine glycosylation sites follow: Asn310 and Asn365. The region spanning 372-403 is the EGF-like 7 domain; that stretch reads CAFVCADCGSGHCDFQSGRCLCSPGVHGPHCN. 3 disulfide bridges follow: Cys376-Cys384, Cys379-Cys391, and Cys393-Cys402. Asn403 carries an N-linked (GlcNAc...) asparagine glycan. A helical membrane pass occupies residues 442 to 462; the sequence is GVMGAGALLVLLVCLLLSLLG. Topologically, residues 463–871 are cytoplasmic; the sequence is CCCACRGKDP…ELGRAGAPTL (409 aa). Ser551 is subject to Phosphoserine. Residues 570 to 579 show a composition bias toward basic and acidic residues; the sequence is EAPAESRDPE. Positions 570-871 are disordered; that stretch reads EAPAESRDPE…ELGRAGAPTL (302 aa). Ser613 bears the Phosphoserine mark. Tyr628 carries the post-translational modification Phosphotyrosine. Residues 632–643 show a composition bias toward basic and acidic residues; the sequence is ARREARPARARG. Phosphoserine occurs at positions 651, 653, 710, 718, and 742. The segment covering 705–725 has biased composition (basic and acidic residues); the sequence is TPSDKSAHTVEHGSPRTRDPT. The span at 821-831 shows a compositional bias: low complexity; the sequence is PPATETPGPEK. The span at 844–856 shows a compositional bias: basic residues; the sequence is KKTPIQKPPRKKS. Residues 861-871 are compositionally biased toward low complexity; the sequence is GELGRAGAPTL.

In terms of assembly, homophilic and heterophilic interaction via its extracellular domain. Interacts with SCARF1. The heterophilic interaction with SCARF1, which is stronger than the homophilic interaction with itself, is suppressed by the presence of SCARF1 ligand such as Ac-LDL. Predominantly expressed in endothelial cells. Expressed in heart, placenta, lung, kidney, spleen, small intestine and ovary.

The protein resides in the membrane. Its function is as follows. Probable adhesion protein, which mediates homophilic and heterophilic interactions. In contrast to SCARF1, it poorly mediates the binding and degradation of acetylated low density lipoprotein (Ac-LDL). This chain is Scavenger receptor class F member 2 (SCARF2), found in Homo sapiens (Human).